A 403-amino-acid polypeptide reads, in one-letter code: GPI-N-acetylgalactosamine transferase PGAP4 (403 aa).

The Cytoplasmic segment spans residues 1–22 (MTTSTSPAAMLLRRLRRLSWGS). Residues 23 to 43 (TAVQLFILTVVTFGLLAPLAC) traverse the membrane as a helical segment. Residues 44-264 (HRLLHSYFYL…INPEPMRILE (221 aa)) lie on the Lumenal side of the membrane. Val109 contacts UDP-N-acetyl-alpha-D-galactosamine. Intrachain disulfides connect Cys132-Cys136 and Cys144-Cys194. The DXD motif motif lies at 211–213 (EDD). The chain crosses the membrane as a helical span at residues 265 to 285 (WVGVGMLLGPVLTWIYMRFAC). Residues 286 to 287 (RP) lie on the Cytoplasmic side of the membrane. The chain crosses the membrane as a helical span at residues 288–308 (GFSWPVMLFFCLYSMGLVELV). At 309–403 (GRHYFLELRR…LRYNFHPSLL (95 aa)) the chain is on the lumenal side. Residues Cys332 and Cys333 are joined by a disulfide bond. UDP-N-acetyl-alpha-D-galactosamine contacts are provided by Thr334, Pro335, and Lys362.

The protein belongs to the PGAP4 family. In terms of processing, glycosylated.

Its subcellular location is the golgi apparatus membrane. Its function is as follows. Golgi-resident glycosylphosphatidylinositol (GPI)-N-acetylgalactosamine transferase that catalyzes the N-acetyl-beta-D-galactosamine transfer from an UDP-N-acetyl-alpha-D-galactosamine to the 4-OH-position of first mannose of the glycosylphosphatidylinositol (GPI) of a GPI-anchored protein (GPI-AP). This modification occurs after the fatty acid remodeling step of the GPI-anchor maturation. The polypeptide is GPI-N-acetylgalactosamine transferase PGAP4 (Mus musculus (Mouse)).